The following is a 569-amino-acid chain: Mitogen-activated protein kinase 7 (569 aa).

The 292-residue stretch at 13–304 folds into the Protein kinase domain; that stretch reads YKIQEIVGKG…AEEALADPYF (292 aa). ATP-binding positions include 19–27 and K42; that span reads VGKGSYGVV. Residue D139 is the Proton acceptor of the active site. T175 is subject to Phosphothreonine. A TXY motif is present at residues 175 to 177; it reads TDY. Y177 carries the phosphotyrosine modification. The segment at 401-420 is disordered; the sequence is TTVHSTSIPPNEGLDATSQV.

Belongs to the protein kinase superfamily. CMGC Ser/Thr protein kinase family. MAP kinase subfamily. In terms of processing, dually phosphorylated on Thr-175 and Tyr-177, which activates the enzyme.

It carries out the reaction L-seryl-[protein] + ATP = O-phospho-L-seryl-[protein] + ADP + H(+). The catalysed reaction is L-threonyl-[protein] + ATP = O-phospho-L-threonyl-[protein] + ADP + H(+). Activated by threonine and tyrosine phosphorylation. This chain is Mitogen-activated protein kinase 7 (MPK7), found in Oryza sativa subsp. japonica (Rice).